The following is a 226-amino-acid chain: MGVNSSKINDKDRSILSIKEQRDKLLRYSKRLEKIEQLEIDIARKCLRDSDKRGALRALKAKKLYSGLITQTYGQLGNIEQLLSTIEFTLIQKDVMFGLQEGTNLIRQLQADMPLERVGRICNDRDEAMSYVDEVNDMLQGRMSRDQEDEIQEELDSLIREQEDEKVKDLEKPGFTPSTGVDVLPSVPLKNAIPSLDESFPKAASVSNTSSAVVIDEELRKDPVLG.

Gly-2 carries the N-myristoyl glycine lipid modification.

The protein belongs to the SNF7 family. In terms of assembly, component of the endosomal sorting required for transport complex III (ESCRT-III).

Its subcellular location is the endosome membrane. The protein localises to the vacuole membrane. The protein resides in the cytoplasm. It localises to the cell cortex. Class E VPS protein implicated in concentration and sorting of cargo proteins of the multivesicular body (MVB) for incorporation into intralumenal vesicles. The lumenal sequestrated membrane proteins will be targeted into the vacuole after fusion of the endosome with the vacuole. The protein is Vacuolar protein sorting-associated protein 20 (vps20) of Schizosaccharomyces pombe (strain 972 / ATCC 24843) (Fission yeast).